The primary structure comprises 710 residues: Fatty acid oxidation complex subunit alpha (710 aa).

Positions 1–190 (MSMEKTFNLA…KMGLVNDVVP (190 aa)) are enoyl-CoA hydratase. The 3-hydroxyacyl-CoA dehydrogenase stretch occupies residues 310–710 (RKVKKVMVLG…ASDGSQFYKK (401 aa)).

This sequence in the N-terminal section; belongs to the enoyl-CoA hydratase/isomerase family. It in the central section; belongs to the 3-hydroxyacyl-CoA dehydrogenase family. In terms of assembly, heterotetramer of two alpha chains (FadJ) and two beta chains (FadI).

It is found in the cytoplasm. The enzyme catalyses a (3S)-3-hydroxyacyl-CoA = a (2E)-enoyl-CoA + H2O. It catalyses the reaction a 4-saturated-(3S)-3-hydroxyacyl-CoA = a (3E)-enoyl-CoA + H2O. It carries out the reaction a (3S)-3-hydroxyacyl-CoA + NAD(+) = a 3-oxoacyl-CoA + NADH + H(+). The catalysed reaction is (3S)-3-hydroxybutanoyl-CoA = (3R)-3-hydroxybutanoyl-CoA. The protein operates within lipid metabolism; fatty acid beta-oxidation. Catalyzes the formation of a hydroxyacyl-CoA by addition of water on enoyl-CoA. Also exhibits 3-hydroxyacyl-CoA epimerase and 3-hydroxyacyl-CoA dehydrogenase activities. This chain is Fatty acid oxidation complex subunit alpha, found in Shewanella frigidimarina (strain NCIMB 400).